The sequence spans 158 residues: 2-C-methyl-D-erythritol 2,4-cyclodiphosphate synthase (158 aa).

A divalent metal cation is bound by residues aspartate 9 and histidine 11. 4-CDP-2-C-methyl-D-erythritol 2-phosphate is bound by residues aspartate 9–histidine 11 and histidine 35–serine 36. Position 43 (histidine 43) interacts with a divalent metal cation. 4-CDP-2-C-methyl-D-erythritol 2-phosphate-binding positions include aspartate 57–glycine 59, phenylalanine 62–aspartate 66, alanine 101–leucine 107, threonine 133–glutamate 136, phenylalanine 140, and arginine 143.

It belongs to the IspF family. Homotrimer. The cofactor is a divalent metal cation.

The catalysed reaction is 4-CDP-2-C-methyl-D-erythritol 2-phosphate = 2-C-methyl-D-erythritol 2,4-cyclic diphosphate + CMP. The protein operates within isoprenoid biosynthesis; isopentenyl diphosphate biosynthesis via DXP pathway; isopentenyl diphosphate from 1-deoxy-D-xylulose 5-phosphate: step 4/6. Its function is as follows. Involved in the biosynthesis of isopentenyl diphosphate (IPP) and dimethylallyl diphosphate (DMAPP), two major building blocks of isoprenoid compounds. Catalyzes the conversion of 4-diphosphocytidyl-2-C-methyl-D-erythritol 2-phosphate (CDP-ME2P) to 2-C-methyl-D-erythritol 2,4-cyclodiphosphate (ME-CPP) with a corresponding release of cytidine 5-monophosphate (CMP). This is 2-C-methyl-D-erythritol 2,4-cyclodiphosphate synthase from Bacillus subtilis (strain 168).